The chain runs to 92 residues: Small ribosomal subunit protein bS20 (92 aa).

The interval 1–23 is disordered; sequence MANTTSAKKATRKIARRTDVNKA.

The protein belongs to the bacterial ribosomal protein bS20 family.

Functionally, binds directly to 16S ribosomal RNA. This is Small ribosomal subunit protein bS20 from Rhizobium etli (strain CIAT 652).